Consider the following 830-residue polypeptide: ATP-dependent DNA helicase chl-1 (830 aa).

A Helicase ATP-binding domain is found at 1-403 (MDEFSFPFQP…HNLLYMKQLE (403 aa)). 35 to 42 (SPTGTGKS) lines the ATP pocket. Composition is skewed to basic and acidic residues over residues 124–140 (GMVEVSRKRKAPARDTD) and 157–168 (NDEKSEKQRDSD). The tract at residues 124-173 (GMVEVSRKRKAPARDTDQFLEPQDEAAPSEEYNNDEKSEKQRDSDFFDDV) is disordered. 4 residues coordinate [4Fe-4S] cluster: Cys-222, Cys-240, Cys-272, and Cys-308. The DEAH box motif lies at 351 to 354 (DEAH).

This sequence belongs to the DEAD box helicase family. DEAH subfamily. DDX11/CHL1 sub-subfamily. [4Fe-4S] cluster is required as a cofactor.

The protein resides in the nucleus. The enzyme catalyses Couples ATP hydrolysis with the unwinding of duplex DNA at the replication fork by translocating in the 5'-3' direction. This creates two antiparallel DNA single strands (ssDNA). The leading ssDNA polymer is the template for DNA polymerase III holoenzyme which synthesizes a continuous strand.. The catalysed reaction is ATP + H2O = ADP + phosphate + H(+). Functionally, required for normal cell proliferation and chromosome stability. Plays a role in DNA repair during replication. The protein is ATP-dependent DNA helicase chl-1 of Caenorhabditis elegans.